Consider the following 100-residue polypeptide: Large ribosomal subunit protein eL21 (100 aa).

The tract at residues 1–21 is disordered; sequence MVKRTHGYRYKSRKLLRKKPR.

This sequence belongs to the eukaryotic ribosomal protein eL21 family.

The chain is Large ribosomal subunit protein eL21 from Pyrobaculum islandicum (strain DSM 4184 / JCM 9189 / GEO3).